The chain runs to 266 residues: Gasdermin bGSDM (266 aa).

A run of 4 beta stranded transmembrane segments spans residues 67–83 (LQQN…GVDI), 95–113 (KLRG…ISYQ), 162–179 (SFSV…DLEA), and 187–203 (ADVN…LMEY).

The protein belongs to the bacterial gasdermin family. Monomer. As to quaternary structure, forms large, homooligomeric ring-shaped pores when inserted in membranes.

Its subcellular location is the cytoplasm. It localises to the cell inner membrane. With respect to regulation, the full-length protein before cleavage is inactive: intramolecular interactions between the N-terminal domain and the C-terminal region mediate autoinhibition. The pyroptosis-like-inducing activity is carried by the released N-terminal domain (Gasdermin bGSDM, N-terminus). In terms of biological role, precursor of a pore-forming protein involved in defense against bacteriophages. Expression of bGSDM and the neighboring protease gene (Gilli_2517) is not toxic in E.coli. Cleavage of this precursor by its dedicated protease releases the active moiety (gasdermin bGSDM, N-terminus) which inserts into membranes, forming pores and triggering cell death. Its function is as follows. Pore-forming protein that causes membrane permeabilization via a pyroptosis-like activity. Makes ring-like pores when released. The chain is Gasdermin bGSDM from Gillisia limnaea (strain DSM 15749 / LMG 21470 / R-8282).